A 418-amino-acid chain; its full sequence is Histidine--tRNA ligase (418 aa).

This sequence belongs to the class-II aminoacyl-tRNA synthetase family. Homodimer.

The protein localises to the cytoplasm. It carries out the reaction tRNA(His) + L-histidine + ATP = L-histidyl-tRNA(His) + AMP + diphosphate + H(+). The protein is Histidine--tRNA ligase of Thermoanaerobacter sp. (strain X514).